A 235-amino-acid chain; its full sequence is Phosphoribosylaminoimidazole-succinocarboxamide synthase (235 aa).

Belongs to the SAICAR synthetase family.

The catalysed reaction is 5-amino-1-(5-phospho-D-ribosyl)imidazole-4-carboxylate + L-aspartate + ATP = (2S)-2-[5-amino-1-(5-phospho-beta-D-ribosyl)imidazole-4-carboxamido]succinate + ADP + phosphate + 2 H(+). It participates in purine metabolism; IMP biosynthesis via de novo pathway; 5-amino-1-(5-phospho-D-ribosyl)imidazole-4-carboxamide from 5-amino-1-(5-phospho-D-ribosyl)imidazole-4-carboxylate: step 1/2. This Clostridium botulinum (strain Alaska E43 / Type E3) protein is Phosphoribosylaminoimidazole-succinocarboxamide synthase.